The chain runs to 140 residues: uncharacterized protein (140 aa).

N-linked (GlcNAc...) asparagine; by host glycosylation is present at N86. A helical transmembrane segment spans residues 92–112; sequence IFNGLGFILIVIFIYLLLITL.

This sequence belongs to the asfivirus B117L family.

The protein localises to the host membrane. It is found in the virion. This is an uncharacterized protein from African swine fever virus (isolate Pig/Kenya/KEN-50/1950) (ASFV).